The sequence spans 435 residues: 3-phosphoshikimate 1-carboxyvinyltransferase (435 aa).

3-phosphoshikimate contacts are provided by K21, S22, and R26. K21 contributes to the phosphoenolpyruvate binding site. Phosphoenolpyruvate contacts are provided by G99 and R127. The 3-phosphoshikimate site is built by S173, Q175, D323, and K350. Position 175 (Q175) interacts with phosphoenolpyruvate. D323 (proton acceptor) is an active-site residue. Positions 354 and 396 each coordinate phosphoenolpyruvate.

It belongs to the EPSP synthase family. Monomer.

It localises to the cytoplasm. It catalyses the reaction 3-phosphoshikimate + phosphoenolpyruvate = 5-O-(1-carboxyvinyl)-3-phosphoshikimate + phosphate. It functions in the pathway metabolic intermediate biosynthesis; chorismate biosynthesis; chorismate from D-erythrose 4-phosphate and phosphoenolpyruvate: step 6/7. Its function is as follows. Catalyzes the transfer of the enolpyruvyl moiety of phosphoenolpyruvate (PEP) to the 5-hydroxyl of shikimate-3-phosphate (S3P) to produce enolpyruvyl shikimate-3-phosphate and inorganic phosphate. This is 3-phosphoshikimate 1-carboxyvinyltransferase from Akkermansia muciniphila (strain ATCC BAA-835 / DSM 22959 / JCM 33894 / BCRC 81048 / CCUG 64013 / CIP 107961 / Muc).